The primary structure comprises 256 residues: Pimeloyl-[acyl-carrier protein] methyl ester esterase (256 aa).

Positions 15-242 (HLVLLHGWGL…AAHAPFISHP (228 aa)) constitute an AB hydrolase-1 domain. Residues Trp-22, 82-83 (SL), and 143-147 (FLALQ) contribute to the substrate site. The active-site Nucleophile is the Ser-82. Active-site residues include Asp-207 and His-235. His-235 contributes to the substrate binding site.

Belongs to the AB hydrolase superfamily. Carboxylesterase BioH family. In terms of assembly, monomer.

Its subcellular location is the cytoplasm. The enzyme catalyses 6-carboxyhexanoyl-[ACP] methyl ester + H2O = 6-carboxyhexanoyl-[ACP] + methanol + H(+). It functions in the pathway cofactor biosynthesis; biotin biosynthesis. Its function is as follows. The physiological role of BioH is to remove the methyl group introduced by BioC when the pimeloyl moiety is complete. It allows to synthesize pimeloyl-ACP via the fatty acid synthetic pathway through the hydrolysis of the ester bonds of pimeloyl-ACP esters. The sequence is that of Pimeloyl-[acyl-carrier protein] methyl ester esterase from Escherichia coli O17:K52:H18 (strain UMN026 / ExPEC).